Reading from the N-terminus, the 258-residue chain is uncharacterized protein (258 aa).

Helical transmembrane passes span 14 to 34, 53 to 73, 110 to 130, 185 to 205, and 238 to 258; these read LAFP…LAAI, VIIW…YFFV, AALC…WLAL, GLAL…GIIF, and GINT…AQLI.

The protein belongs to the TMEM19 family.

The protein resides in the cell membrane. This is an uncharacterized protein from Synechocystis sp. (strain ATCC 27184 / PCC 6803 / Kazusa).